The sequence spans 114 residues: Notch-regulated ankyrin repeat-containing protein (114 aa).

2 ANK repeats span residues 50-79 and 83-112; these read EGQT…DIRL and DGWS…YAAS.

The protein belongs to the NRARP family. Interacts with LEF1.

Functionally, downstream effector of Notch signaling. Involved in the regulation of liver cancer cells self-renewal. Involved in angiogenesis acting downstream of Notch at branch points to regulate vascular density. Proposed to integrate endothelial Notch and Wnt signaling to control stalk cell proliferation and to stablilize new endothelial connections during angiogenesis. During somitogenesis involved in maintenance of proper somite segmentation and proper numbers of somites and vertebrae. Required for proper anterior-posterior somite patterning. Proposed to function in a negative feedback loop to destabilize Notch 1 intracellular domain (NICD) and down-regulate the Notch signal, preventing expansion of the Notch signal into the anterior somite domain. This is Notch-regulated ankyrin repeat-containing protein (NRARP) from Homo sapiens (Human).